Consider the following 360-residue polypeptide: Cell division protein DivIB (360 aa).

Residues 1–54 (MTEKDSNVEESVLEVEQASQVELDSEQISPAEKESVLAEEKEFSTDVDIPEMTA) form a disordered region. Residues 1-139 (MTEKDSNVEE…VDIPSKVVWK (139 aa)) lie on the Cytoplasmic side of the membrane. Polar residues predominate over residues 17 to 28 (QASQVELDSEQI). Over residues 31 to 44 (AEKESVLAEEKEFS) the composition is skewed to basic and acidic residues. Residues 140–160 (AIPVLVTSLLLAALALYFISP) traverse the membrane as a helical segment. The Extracellular portion of the chain corresponds to 161 to 360 (TSKKKQIEVV…MEVGIYRYAS (200 aa)). Positions 162 to 233 (SKKKQIEVVG…ATFTIHIKEY (72 aa)) constitute a POTRA domain.

It belongs to the FtsQ/DivIB family. DivIB subfamily.

Its subcellular location is the cell membrane. In terms of biological role, cell division protein that may be involved in stabilizing or promoting the assembly of the division complex. The chain is Cell division protein DivIB from Streptococcus suis (strain GZ1).